The chain runs to 40 residues: Beta-defensin 1 (40 aa).

3 disulfides stabilise this stretch: Cys-7-Cys-35, Cys-14-Cys-29, and Cys-19-Cys-36. Glycine amide is present on Gly-40.

In terms of assembly, monomer. Homodimer.

It is found in the secreted. The protein resides in the membrane. In terms of biological role, has antimicrobial activity against the Gram-positive bacteria methicillin-resistant S.aureus ATCC 33591 and L.monocytogenes EGD, the Gram-negative bacterium E.coli ML53p and the yeast C.albicans 820. Has no hemolytic activity towards human erythrocytes. This is Beta-defensin 1 from Emys orbicularis (European pond turtle).